We begin with the raw amino-acid sequence, 359 residues long: F-box/kelch-repeat protein At1g15670 (359 aa).

The F-box domain occupies 2 to 49 (ELIPDLPETVAYECLLRSSYKQFPLMASVCKLWQREISLSDFFRHRKA). Kelch repeat units lie at residues 119–167 (DLVV…ASDS), 170–217 (NVFV…FHAG), 219–269 (FHVI…CAAG), 271–310 (NGDL…AIRR), and 313–358 (NLVV…CFLE).

In Arabidopsis thaliana (Mouse-ear cress), this protein is F-box/kelch-repeat protein At1g15670.